The primary structure comprises 217 residues: Small ribosomal subunit protein uS3 (217 aa).

In terms of domain architecture, KH type-2 spans 38-106; the sequence is IRKYIEQRLA…RVHINIIEIK (69 aa).

Belongs to the universal ribosomal protein uS3 family. In terms of assembly, part of the 30S ribosomal subunit. Forms a tight complex with proteins S10 and S14.

Functionally, binds the lower part of the 30S subunit head. Binds mRNA in the 70S ribosome, positioning it for translation. The sequence is that of Small ribosomal subunit protein uS3 from Lactiplantibacillus plantarum (strain ATCC BAA-793 / NCIMB 8826 / WCFS1) (Lactobacillus plantarum).